Reading from the N-terminus, the 78-residue chain is MSSIEERVKKIVAEQLGVKEEEVKNEASFVEDLGADSLDTVELVMALEEEFETEIPDEEAEKITTVQLAIDYINANLA.

One can recognise a Carrier domain in the interval 2-77 (SSIEERVKKI…LAIDYINANL (76 aa)). The residue at position 37 (Ser-37) is an O-(pantetheine 4'-phosphoryl)serine.

Belongs to the acyl carrier protein (ACP) family. Post-translationally, 4'-phosphopantetheine is transferred from CoA to a specific serine of apo-ACP by AcpS. This modification is essential for activity because fatty acids are bound in thioester linkage to the sulfhydryl of the prosthetic group.

It localises to the cytoplasm. The protein operates within lipid metabolism; fatty acid biosynthesis. Its function is as follows. Carrier of the growing fatty acid chain in fatty acid biosynthesis. This chain is Acyl carrier protein, found in Cellvibrio japonicus (strain Ueda107) (Pseudomonas fluorescens subsp. cellulosa).